The sequence spans 656 residues: DNA ligase (656 aa).

Residues 32–36 (DAVYD) and 81–82 (SL) each bind NAD(+). K112 serves as the catalytic N6-AMP-lysine intermediate. The NAD(+) site is built by R133, E167, and K306. Residues C400, C403, C416, and C421 each coordinate Zn(2+). One can recognise a BRCT domain in the interval 577-656 (KSSSVFNNKT…ELLKRLKELD (80 aa)).

Belongs to the NAD-dependent DNA ligase family. LigA subfamily. The cofactor is Mg(2+). Mn(2+) is required as a cofactor.

The enzyme catalyses NAD(+) + (deoxyribonucleotide)n-3'-hydroxyl + 5'-phospho-(deoxyribonucleotide)m = (deoxyribonucleotide)n+m + AMP + beta-nicotinamide D-nucleotide.. Its function is as follows. DNA ligase that catalyzes the formation of phosphodiester linkages between 5'-phosphoryl and 3'-hydroxyl groups in double-stranded DNA using NAD as a coenzyme and as the energy source for the reaction. It is essential for DNA replication and repair of damaged DNA. In Helicobacter pylori (strain P12), this protein is DNA ligase.